We begin with the raw amino-acid sequence, 284 residues long: Bifunctional protein FolD 1 (284 aa).

Residues 166–168 (GAS), Ser-191, and Ile-232 each bind NADP(+).

This sequence belongs to the tetrahydrofolate dehydrogenase/cyclohydrolase family. In terms of assembly, homodimer.

The catalysed reaction is (6R)-5,10-methylene-5,6,7,8-tetrahydrofolate + NADP(+) = (6R)-5,10-methenyltetrahydrofolate + NADPH. The enzyme catalyses (6R)-5,10-methenyltetrahydrofolate + H2O = (6R)-10-formyltetrahydrofolate + H(+). Its pathway is one-carbon metabolism; tetrahydrofolate interconversion. Catalyzes the oxidation of 5,10-methylenetetrahydrofolate to 5,10-methenyltetrahydrofolate and then the hydrolysis of 5,10-methenyltetrahydrofolate to 10-formyltetrahydrofolate. This chain is Bifunctional protein FolD 1, found in Hydrogenovibrio crunogenus (strain DSM 25203 / XCL-2) (Thiomicrospira crunogena).